The following is a 201-amino-acid chain: LexA repressor 1 (201 aa).

Residues 28 to 48 (LREIAAHLKISGTLGVSKHLE) constitute a DNA-binding region (H-T-H motif). Active-site for autocatalytic cleavage activity residues include serine 120 and lysine 157.

This sequence belongs to the peptidase S24 family. In terms of assembly, homodimer.

It catalyses the reaction Hydrolysis of Ala-|-Gly bond in repressor LexA.. Functionally, represses a number of genes involved in the response to DNA damage (SOS response), including recA and lexA. In the presence of single-stranded DNA, RecA interacts with LexA causing an autocatalytic cleavage which disrupts the DNA-binding part of LexA, leading to derepression of the SOS regulon and eventually DNA repair. This chain is LexA repressor 1, found in Geobacter sulfurreducens (strain ATCC 51573 / DSM 12127 / PCA).